Reading from the N-terminus, the 117-residue chain is Anti-sigma F factor antagonist (117 aa).

An STAS domain is found at 2–115 (HFQLEMVTRE…QAIDRVRGIV (114 aa)). Position 58 is a phosphoserine (S58).

This sequence belongs to the anti-sigma-factor antagonist family. Post-translationally, phosphorylated by SpoIIAB on a serine residue.

Functionally, in the phosphorylated form it could act as an anti-anti-sigma factor that counteracts SpoIIAB and thus releases sigma f from inhibition. The sequence is that of Anti-sigma F factor antagonist (spoIIAA) from Lysinibacillus sphaericus (Bacillus sphaericus).